The sequence spans 1040 residues: Regulator of telomere elongation helicase 1 homolog (1040 aa).

One can recognise a Helicase ATP-binding domain in the interval 52 to 355; sequence RGINVEFPFE…KGLLLKLQEL (304 aa). 87–94 contributes to the ATP binding site; that stretch reads SPTGTGKT. Positions 117-137 are disordered; that stretch reads RKNSAIPWSDSDEPLSQSGGG. The [4Fe-4S] cluster site is built by C181, C202, C210, and C246. The DEAH box signature appears at 289 to 292; sequence DEAH. Residues 926-949 are disordered; it reads KVPESQGSASSSVLTAKGNGGGDK. A compositionally biased stretch (polar residues) spans 930–939; the sequence is SQGSASSSVL. A PIP-box; degenerate motif is present at residues 992-999; sequence QSIVQLFC.

Belongs to the helicase family. RAD3/XPD subfamily.

It localises to the nucleus. The enzyme catalyses ATP + H2O = ADP + phosphate + H(+). Its function is as follows. A probable ATP-dependent DNA helicase implicated in DNA replication, DNA repair and the maintenance of genomic stability. Acts as an anti-recombinase to counteract toxic recombination and limit crossover during meiosis. Regulates meiotic recombination and crossover homeostasis by physically dissociating strand invasion events and thereby promotes noncrossover repair by meiotic synthesis dependent strand annealing (SDSA) as well as disassembly of D loop recombination intermediates. Also plays a role in preserving the stability of 45S rDNA repeats. The chain is Regulator of telomere elongation helicase 1 homolog from Arabidopsis thaliana (Mouse-ear cress).